The sequence spans 442 residues: Proline--tRNA ligase (442 aa).

This sequence belongs to the class-II aminoacyl-tRNA synthetase family. ProS type 2 subfamily. Homodimer.

It localises to the cytoplasm. It carries out the reaction tRNA(Pro) + L-proline + ATP = L-prolyl-tRNA(Pro) + AMP + diphosphate. Its function is as follows. Catalyzes the attachment of proline to tRNA(Pro) in a two-step reaction: proline is first activated by ATP to form Pro-AMP and then transferred to the acceptor end of tRNA(Pro). This chain is Proline--tRNA ligase, found in Sinorhizobium medicae (strain WSM419) (Ensifer medicae).